A 211-amino-acid chain; its full sequence is SAGA-associated factor 11 homolog 1 (211 aa).

An SGF11-type zinc finger spans residues 115-136 (CTCPNCDRLVAAARFAPHLEKC). A disordered region spans residues 149 to 211 (RRLATKEGSS…GSKKNNGKTF (63 aa)). Residues 157 to 166 (SSASTSSTST) show a composition bias toward low complexity. Phosphoserine is present on serine 187. A compositionally biased stretch (low complexity) spans 197-211 (SSRNNGSKKNNGKTF).

It belongs to the SGF11 family. Component of some SAGA transcription coactivator-HAT complexes, at least composed of Ada2b, not/nonstop, Pcaf/Gcn5, Sgf11 and Spt3. Within the SAGA complex, Sgf11, e(y)2, and not/nonstop form an additional subcomplex of SAGA called the DUB module (deubiquitination module). Interacts directly with not/nonstop. Interacts with the AMEX complex component xmas-2. Interacts with Cbp80; important for promoter recruitment of Sgf11 that is not associated with the DUB module.

The protein localises to the nucleus. It is found in the nucleoplasm. It localises to the cytoplasm. Component of the transcription regulatory histone acetylation (HAT) complex SAGA, a multiprotein complex that activates transcription by remodeling chromatin and mediating histone acetylation and deubiquitination. Within the SAGA complex, participates in a subcomplex that specifically deubiquitinates histone H2B. The SAGA complex is recruited to specific gene promoters by activators, where it is required for transcription. Required for nuclear receptor-mediated transactivation. Binds independently on SAGA to promoters in an RNA-dependent manner. Binds to mRNA and is essential for total mRNA export from the nucleus. Required to counteract heterochromatin silencing. Controls the development of neuronal connectivity in visual system by being required for accurate axon targeting in the optic lobe. Required for expression of ecdysone-induced genes such as br/broad. The chain is SAGA-associated factor 11 homolog 1 from Drosophila grimshawi (Hawaiian fruit fly).